The primary structure comprises 885 residues: Initiator protein NS1 (885 aa).

The tract at residues 404–477 (AEAGPSGTQP…GREDIFSGAP (74 aa)) is disordered. Residues 409 to 423 (SGTQPVETAQQSPPT) are compositionally biased toward polar residues. Residues 452-465 (QAAGGSEMGAGGSA) show a composition bias toward gly residues.

The protein belongs to the parvoviruses initiator protein NS1 family. As to quaternary structure, homooligomer. Mg(2+) is required as a cofactor.

It is found in the host nucleus. The catalysed reaction is ATP + H2O = ADP + phosphate + H(+). Its function is as follows. Multifunctional protein which displays endonuclease and helicase activities required for initiating and directing viral DNA replication. Also plays a role in viral packaging and transactivation of several promoters. Binds site-specifically to 2-3 approximate tandem copies within the origins of replication (Ori), unwinds this hairpin region and nicks one DNA strand thereby initiating the rolling circle replication (RCR). This chain is Initiator protein NS1, found in Bombyx mori densovirus (BmDNV).